The chain runs to 210 residues: 23.5 kDa heat shock protein, mitochondrial (210 aa).

The N-terminal 20 residues, 1–20 (MASSSALALRRLLSSSTVAV), are a transit peptide targeting the mitochondrion. A sHSP domain is found at 102 to 210 (MGASGVRRGW…RNNIRHINVD (109 aa)).

Belongs to the small heat shock protein (HSP20) family. May form oligomeric structures.

Its subcellular location is the mitochondrion. The sequence is that of 23.5 kDa heat shock protein, mitochondrial (HSP23.5) from Arabidopsis thaliana (Mouse-ear cress).